Here is a 139-residue protein sequence, read N- to C-terminus: MAMTYHLDVVSAEQQMFSGLVEKIQVTGSEGELGIYPGHAPLLTAIKPGMIRIVKQHGHEEFIYLSGGILEVQPGTVTVLADTAIRGQDLDEARALEAKRKAEEHIKSSHGDVDYAQASAELAKAIAKLRVIELTKKAM.

The protein belongs to the ATPase epsilon chain family. F-type ATPases have 2 components, CF(1) - the catalytic core - and CF(0) - the membrane proton channel. CF(1) has five subunits: alpha(3), beta(3), gamma(1), delta(1), epsilon(1). CF(0) has three main subunits: a, b and c.

The protein localises to the cell inner membrane. Its function is as follows. Produces ATP from ADP in the presence of a proton gradient across the membrane. This chain is ATP synthase epsilon chain, found in Salmonella arizonae (strain ATCC BAA-731 / CDC346-86 / RSK2980).